A 360-amino-acid chain; its full sequence is Putative F-box protein At3g47150 (360 aa).

Residues asparagine 6 to threonine 56 form the F-box domain.

The protein is Putative F-box protein At3g47150 of Arabidopsis thaliana (Mouse-ear cress).